Here is a 199-residue protein sequence, read N- to C-terminus: ATP-dependent Clp protease proteolytic subunit (199 aa).

Residue Ser-98 is the Nucleophile of the active site. His-123 is an active-site residue.

It belongs to the peptidase S14 family. Fourteen ClpP subunits assemble into 2 heptameric rings which stack back to back to give a disk-like structure with a central cavity, resembling the structure of eukaryotic proteasomes.

The protein resides in the cytoplasm. It carries out the reaction Hydrolysis of proteins to small peptides in the presence of ATP and magnesium. alpha-casein is the usual test substrate. In the absence of ATP, only oligopeptides shorter than five residues are hydrolyzed (such as succinyl-Leu-Tyr-|-NHMec, and Leu-Tyr-Leu-|-Tyr-Trp, in which cleavage of the -Tyr-|-Leu- and -Tyr-|-Trp bonds also occurs).. Its function is as follows. Cleaves peptides in various proteins in a process that requires ATP hydrolysis. Has a chymotrypsin-like activity. Plays a major role in the degradation of misfolded proteins. This chain is ATP-dependent Clp protease proteolytic subunit, found in Clostridium botulinum (strain Eklund 17B / Type B).